Here is a 321-residue protein sequence, read N- to C-terminus: tRNA pseudouridine synthase B (321 aa).

Aspartate 47 (nucleophile) is an active-site residue.

It belongs to the pseudouridine synthase TruB family. Type 1 subfamily.

It catalyses the reaction uridine(55) in tRNA = pseudouridine(55) in tRNA. Its function is as follows. Responsible for synthesis of pseudouridine from uracil-55 in the psi GC loop of transfer RNAs. In Shewanella baltica (strain OS223), this protein is tRNA pseudouridine synthase B.